Here is a 92-residue protein sequence, read N- to C-terminus: Small ribosomal subunit protein uS19 (92 aa).

It belongs to the universal ribosomal protein uS19 family.

Its function is as follows. Protein S19 forms a complex with S13 that binds strongly to the 16S ribosomal RNA. The protein is Small ribosomal subunit protein uS19 of Desulfosudis oleivorans (strain DSM 6200 / JCM 39069 / Hxd3) (Desulfococcus oleovorans).